Reading from the N-terminus, the 947-residue chain is Bifunctional glutamine synthetase adenylyltransferase/adenylyl-removing enzyme (947 aa).

The segment at 1-440 (MTPLSSPLSQ…VFNELIGDDE (440 aa)) is adenylyl removase. The segment at 450 to 947 (SEPWREVWQD…ASWRKWLVAV (498 aa)) is adenylyl transferase.

This sequence belongs to the GlnE family. Requires Mg(2+) as cofactor.

The catalysed reaction is [glutamine synthetase]-O(4)-(5'-adenylyl)-L-tyrosine + phosphate = [glutamine synthetase]-L-tyrosine + ADP. It carries out the reaction [glutamine synthetase]-L-tyrosine + ATP = [glutamine synthetase]-O(4)-(5'-adenylyl)-L-tyrosine + diphosphate. Its function is as follows. Involved in the regulation of glutamine synthetase GlnA, a key enzyme in the process to assimilate ammonia. When cellular nitrogen levels are high, the C-terminal adenylyl transferase (AT) inactivates GlnA by covalent transfer of an adenylyl group from ATP to specific tyrosine residue of GlnA, thus reducing its activity. Conversely, when nitrogen levels are low, the N-terminal adenylyl removase (AR) activates GlnA by removing the adenylyl group by phosphorolysis, increasing its activity. The regulatory region of GlnE binds the signal transduction protein PII (GlnB) which indicates the nitrogen status of the cell. This Salmonella paratyphi A (strain ATCC 9150 / SARB42) protein is Bifunctional glutamine synthetase adenylyltransferase/adenylyl-removing enzyme.